The chain runs to 93 residues: MPRLSEAEIAEQLAQRPDWSLENNEIVRTFRLANFPAAIAFVTHVAFLAEAAGHHPDIDIRYNRVRLALTTHDAGGLTEKDFALAAAIDEIMG.

Belongs to the pterin-4-alpha-carbinolamine dehydratase family.

It catalyses the reaction (4aS,6R)-4a-hydroxy-L-erythro-5,6,7,8-tetrahydrobiopterin = (6R)-L-erythro-6,7-dihydrobiopterin + H2O. This chain is Putative pterin-4-alpha-carbinolamine dehydratase, found in Chloroflexus aurantiacus (strain ATCC 29366 / DSM 635 / J-10-fl).